Here is a 569-residue protein sequence, read N- to C-terminus: CTP synthase (569 aa).

Residues 1–272 (MARPKNVKHI…DSRVLKKLGI (272 aa)) are amidoligase domain. Ser18 contributes to the CTP binding site. Ser18 is a UTP binding site. 19–24 (SLGKGI) is a binding site for ATP. Tyr59 provides a ligand contact to L-glutamine. Asp76 is an ATP binding site. Residues Asp76 and Glu146 each contribute to the Mg(2+) site. Residues 153–155 (DIE), 193–198 (KTKPTQ), and Lys229 each bind CTP. Residues 193–198 (KTKPTQ) and Lys229 each bind UTP. The region spanning 299–543 (TIGICGKYTE…VAAAKDYARG (245 aa)) is the Glutamine amidotransferase type-1 domain. An L-glutamine-binding site is contributed by Gly363. Cys390 functions as the Nucleophile; for glutamine hydrolysis in the catalytic mechanism. L-glutamine contacts are provided by residues 391–394 (LGMQ), Glu414, and Arg471. Catalysis depends on residues His516 and Glu518.

Belongs to the CTP synthase family. Homotetramer.

The enzyme catalyses UTP + L-glutamine + ATP + H2O = CTP + L-glutamate + ADP + phosphate + 2 H(+). It catalyses the reaction L-glutamine + H2O = L-glutamate + NH4(+). The catalysed reaction is UTP + NH4(+) + ATP = CTP + ADP + phosphate + 2 H(+). It participates in pyrimidine metabolism; CTP biosynthesis via de novo pathway; CTP from UDP: step 2/2. With respect to regulation, allosterically activated by GTP, when glutamine is the substrate; GTP has no effect on the reaction when ammonia is the substrate. The allosteric effector GTP functions by stabilizing the protein conformation that binds the tetrahedral intermediate(s) formed during glutamine hydrolysis. Inhibited by the product CTP, via allosteric rather than competitive inhibition. Functionally, catalyzes the ATP-dependent amination of UTP to CTP with either L-glutamine or ammonia as the source of nitrogen. Regulates intracellular CTP levels through interactions with the four ribonucleotide triphosphates. The polypeptide is CTP synthase (Chlorobium chlorochromatii (strain CaD3)).